A 2464-amino-acid chain; its full sequence is Nonribosomal peptide synthetase NPS2 (2464 aa).

Residues 275–670 are adenylation 1; that stretch reads DDHHPGTSQP…GRIDTQIKLR (396 aa). The Carrier 1 domain maps to 814–888; that stretch reads TKAEGQLLEI…QIAKALDASS (75 aa). An O-(pantetheine 4'-phosphoryl)serine modification is found at S848. A condensation 1 region spans residues 924-1325; sequence IYPPFPLQEG…EGLALDLAQG (402 aa). The Carrier 2 domain occupies 1364-1437; the sequence is EDLLLRLRKI…RMAASAGKKI (74 aa). S1398 bears the O-(pantetheine 4'-phosphoryl)serine mark. Residues 1479 to 1887 are condensation 2; the sequence is DVFPVTTLQA…LRVLVDDLDA (409 aa). The Carrier 3 domain occupies 1917-1993; sequence SSWDEKSSTL…DLVMRAGAED (77 aa). S1954 is subject to O-(pantetheine 4'-phosphoryl)serine. The tract at residues 2047 to 2340 is condensation 3; sequence GGSRYQHVFG…ATQIQDDLRE (294 aa).

The protein belongs to the NRP synthetase family.

The protein operates within siderophore biosynthesis. Its function is as follows. Nonribosomal peptide synthetase; part of the siderophore basidioferrin biosynthetic pathway. The biosynthesis of basidioferrin depends on the hydroxylation of ornithine to N(5)-hydroxyornithine, catalyzed by the monooxygenase SMO1. The second step, the acylation of N(5)-hydroxy-L-ornithine is catalyzed by a not yet identified N-acyltransferase. Finally, assembly of basidioferrin is catalyzed by the nonribosomal peptide synthase (NRPS) NPS2 via amide bond formation between three L-AHO molecules to release the linear L-AHO trimer. N-5-acetyl-N-5-hydroxy-L-ornithine (L-AHO) and N-5-cis-anhydromevalonyl-N-5-hydroxy-L-ornithine (L-AMHO) are accepted as the substrates by the NPS2 adenylation (A) domain, but only L-AHO is trimerized. This chain is Nonribosomal peptide synthetase NPS2, found in Ceriporiopsis subvermispora (strain B) (White-rot fungus).